The primary structure comprises 245 residues: Venom nerve growth factor 1 (245 aa).

The N-terminal stretch at 1–18 (MSMLCYTLIIAFLIGIWA) is a signal peptide. Residues 19–125 (APKSEDNVPL…ALNRNIRAKR (107 aa)) constitute a propeptide that is removed on maturation. Basic and acidic residues predominate over residues 47-66 (GLKTSRNTDQRHPAPKKAED). The tract at residues 47-69 (GLKTSRNTDQRHPAPKKAEDQEL) is disordered. 3 disulfides stabilise this stretch: Cys-139–Cys-206, Cys-182–Cys-234, and Cys-194–Cys-236. Asn-148 and Asn-151 each carry an N-linked (GlcNAc...) asparagine glycan.

Belongs to the NGF-beta family. As to quaternary structure, homodimer; non-covalently linked. Expressed by the venom gland.

It is found in the secreted. Nerve growth factor is important for the development and maintenance of the sympathetic and sensory nervous systems. It stimulates division and differentiation of sympathetic and embryonic sensory neurons as well as basal forebrain cholinergic neurons in the brain. Its relevance in the snake venom is not clear. However, it has been shown to inhibit metalloproteinase-dependent proteolysis of platelet glycoprotein Ib alpha, suggesting a metalloproteinase inhibition to prevent metalloprotease autodigestion and/or protection against prey proteases. Binds a lipid between the two protein chains in the homodimer. The lipid-bound form promotes histamine relase from mouse mast cells, contrary to the lipid-free form. The sequence is that of Venom nerve growth factor 1 from Tropidechis carinatus (Australian rough-scaled snake).